Reading from the N-terminus, the 158-residue chain is Endoribonuclease YbeY (158 aa).

Residues histidine 119, histidine 123, and aspartate 129 each coordinate Zn(2+).

It belongs to the endoribonuclease YbeY family. Requires Zn(2+) as cofactor.

The protein resides in the cytoplasm. Functionally, single strand-specific metallo-endoribonuclease involved in late-stage 70S ribosome quality control and in maturation of the 3' terminus of the 16S rRNA. This is Endoribonuclease YbeY from Chlamydia pneumoniae (Chlamydophila pneumoniae).